We begin with the raw amino-acid sequence, 276 residues long: Undecaprenyl-diphosphatase 1 (276 aa).

Helical transmembrane passes span 4–24 (ILICKALILGVVEGLTEFLPV), 46–63 (TFDVVIQFGAILAVCWEY), 83–103 (FTLNVVIATIPAIALGLLFEK), 108–128 (VLFSPVPVAFALVVGGAIILW), 187–207 (VATEFSFFLAIPIIFGATLYE), 217–237 (VDSLGLFVLGAVAAFVSAFVC), and 252–272 (VFAWYRIAFGLFVLLVGYSGW).

It belongs to the UppP family.

The protein localises to the cell inner membrane. It catalyses the reaction di-trans,octa-cis-undecaprenyl diphosphate + H2O = di-trans,octa-cis-undecaprenyl phosphate + phosphate + H(+). Catalyzes the dephosphorylation of undecaprenyl diphosphate (UPP). Confers resistance to bacitracin. The chain is Undecaprenyl-diphosphatase 1 from Burkholderia lata (strain ATCC 17760 / DSM 23089 / LMG 22485 / NCIMB 9086 / R18194 / 383).